Here is a 21-residue protein sequence, read N- to C-terminus: Histone H2B 1 (21 aa).

The tract at residues 1–21 (MPDPAKTAPKKGSKKAVTKXA) is disordered. Lys-6 and Lys-11 each carry N6-acetyllysine. The span at 8–21 (APKKGSKKAVTKXA) shows a compositional bias: basic residues. Ser-13 carries the post-translational modification Phosphoserine. Residues Lys-14 and Lys-19 each carry the N6-acetyllysine modification. A Glycyl lysine isopeptide (Lys-Gly) (interchain with G-Cter in ubiquitin) cross-link involves residue Lys-19.

It belongs to the histone H2B family. As to quaternary structure, the nucleosome is a histone octamer containing two molecules each of H2A, H2B, H3 and H4 assembled in one H3-H4 heterotetramer and two H2A-H2B heterodimers. The octamer wraps approximately 147 bp of DNA. Post-translationally, monoubiquitination at the C-terminal Lys gives a specific tag for epigenetic transcriptional activation and is also prerequisite for histone H3 'Lys-4' and 'Lys-79' methylation. In terms of processing, phosphorylated during apoptosis; which facilitates apoptotic chromatin condensation.

Its subcellular location is the nucleus. It is found in the chromosome. Functionally, core component of nucleosome. Nucleosomes wrap and compact DNA into chromatin, limiting DNA accessibility to the cellular machineries which require DNA as a template. Histones thereby play a central role in transcription regulation, DNA repair, DNA replication and chromosomal stability. DNA accessibility is regulated via a complex set of post-translational modifications of histones, also called histone code, and nucleosome remodeling. In terms of biological role, has broad-spectrum antimicrobial and antibacterial activity. It is important in the antimicrobial defenses of fish skin and possesses strong activity against saprolegnia, the most common fungal infection in fish. It is also inhibitory to fish bacterial pathogens, such as aeromonas hydrophila, vibrio alginolyticus and E.coli D31. The chain is Histone H2B 1 from Ictalurus punctatus (Channel catfish).